Consider the following 156-residue polypeptide: Large ribosomal subunit protein uL22 (156 aa).

It belongs to the universal ribosomal protein uL22 family. In terms of assembly, part of the 50S ribosomal subunit.

Functionally, this protein binds specifically to 23S rRNA. It makes multiple contacts with different domains of the 23S rRNA in the assembled 50S subunit and ribosome. Its function is as follows. The globular domain of the protein is located near the polypeptide exit tunnel on the outside of the subunit, while an extended beta-hairpin is found that lines the wall of the exit tunnel in the center of the 70S ribosome. The sequence is that of Large ribosomal subunit protein uL22 from Halobacterium salinarum (strain ATCC 700922 / JCM 11081 / NRC-1) (Halobacterium halobium).